The primary structure comprises 32 residues: Coenzyme PQQ synthesis protein A (32 aa).

The pyrroloquinoline quinone (Glu-Tyr) cross-link spans 16–20; it reads EINMY.

Belongs to the PqqA family.

It functions in the pathway cofactor biosynthesis; pyrroloquinoline quinone biosynthesis. Required for coenzyme pyrroloquinoline quinone (PQQ) biosynthesis. PQQ is probably formed by cross-linking a specific glutamate to a specific tyrosine residue and excising these residues from the peptide. The sequence is that of Coenzyme PQQ synthesis protein A from Dinoroseobacter shibae (strain DSM 16493 / NCIMB 14021 / DFL 12).